The sequence spans 520 residues: Legumin A2 (520 aa).

An N-terminal signal peptide occupies residues 1–22 (MATKLLALSLSFCFLLLGGCFA). 2 cysteine pairs are disulfide-bonded: Cys-32/Cys-65 and Cys-108/Cys-342. The region spanning 37–233 (LNALEPDNRI…AFNVNRHIVD (197 aa)) is the Cupin type-1 1 domain. A disordered region spans residues 250–339 (VKGGLSIISP…RRQGDNGLEE (90 aa)). Residues 348-497 (LNIGPSSSPD…TFNLQRNEAR (150 aa)) form the Cupin type-1 2 domain.

This sequence belongs to the 11S seed storage protein (globulins) family. Hexamer; each subunit is composed of an acidic and a basic chain derived from a single precursor and linked by a disulfide bond.

Functionally, this protein found in the seeds of many leguminous and non-leguminous plants is the source of sulfur-containing amino acids in seed meals. The protein is Legumin A2 (LEGA2) of Pisum sativum (Garden pea).